The sequence spans 214 residues: Probable chemoreceptor glutamine deamidase CheD (214 aa).

This sequence belongs to the CheD family.

The catalysed reaction is L-glutaminyl-[protein] + H2O = L-glutamyl-[protein] + NH4(+). Probably deamidates glutamine residues to glutamate on methyl-accepting chemotaxis receptors (MCPs), playing an important role in chemotaxis. This chain is Probable chemoreceptor glutamine deamidase CheD, found in Vibrio vulnificus (strain CMCP6).